Here is a 223-residue protein sequence, read N- to C-terminus: Small ribosomal subunit protein uS3 (223 aa).

The 79-residue stretch at 39-117 (IREHLRKKPS…RPELNAKLVA (79 aa)) folds into the KH type-2 domain.

This sequence belongs to the universal ribosomal protein uS3 family. In terms of assembly, part of the 30S ribosomal subunit. Forms a tight complex with proteins S10 and S14.

In terms of biological role, binds the lower part of the 30S subunit head. Binds mRNA in the 70S ribosome, positioning it for translation. The sequence is that of Small ribosomal subunit protein uS3 from Chlamydia felis (strain Fe/C-56) (Chlamydophila felis).